The primary structure comprises 390 residues: tRNA(Met) cytidine acetate ligase (390 aa).

ATP is bound by residues 7 to 20, G101, N162, and R187; that span reads VVEY…HKLH.

It belongs to the TmcAL family.

It localises to the cytoplasm. The catalysed reaction is cytidine(34) in elongator tRNA(Met) + acetate + ATP = N(4)-acetylcytidine(34) in elongator tRNA(Met) + AMP + diphosphate. Its function is as follows. Catalyzes the formation of N(4)-acetylcytidine (ac(4)C) at the wobble position of elongator tRNA(Met), using acetate and ATP as substrates. First activates an acetate ion to form acetyladenylate (Ac-AMP) and then transfers the acetyl group to tRNA to form ac(4)C34. This is tRNA(Met) cytidine acetate ligase from Listeria monocytogenes serovar 1/2a (strain ATCC BAA-679 / EGD-e).